The primary structure comprises 72 residues: Light-harvesting polypeptide B-885 alpha-1 chain (72 aa).

Residues 1 to 16 (SAPAQWKLWLVMDPRT) lie on the Cytoplasmic side of the membrane. A helical transmembrane segment spans residues 17 to 37 (VMIGTAAWLGVLALLIHFLLL). A bacteriochlorophyll is bound at residue histidine 33. Over 38-72 (GTERFNWIDTGLKEQKATAAAQAAITPAPVTAAAK) the chain is Periplasmic.

The protein belongs to the antenna complex alpha subunit family. In terms of assembly, the core complex is formed by different alpha and beta chains, binding bacteriochlorophyll molecules, and arranged most probably in tetrameric structures disposed around the reaction center. The non-pigmented gamma chains may constitute additional components.

It localises to the cell inner membrane. In terms of biological role, antenna complexes are light-harvesting systems, which transfer the excitation energy to the reaction centers. This chain is Light-harvesting polypeptide B-885 alpha-1 chain, found in Rhodocyclus tenuis (Rhodospirillum tenue).